Reading from the N-terminus, the 129-residue chain is Small ribosomal subunit protein uS11 (129 aa).

The segment at 109-129 is disordered; that stretch reads VDDTPVPHNGCRPKKKFRKAS. A compositionally biased stretch (basic residues) spans 119 to 129; the sequence is CRPKKKFRKAS.

This sequence belongs to the universal ribosomal protein uS11 family. In terms of assembly, part of the 30S ribosomal subunit. Interacts with proteins S7 and S18. Binds to the C-terminus of IF-3; however exactly how IF-3 interacts with the 30S subunit is unclear.

Located on the upper part of the platform of the 30S subunit, where it bridges several disparate RNA helices of the 16S rRNA. Forms part of the Shine-Dalgarno cleft in the 70S ribosome. The chain is Small ribosomal subunit protein uS11 (rpsK) from Thermus thermophilus (strain ATCC BAA-163 / DSM 7039 / HB27).